Consider the following 337-residue polypeptide: Mitochondrial metalloendopeptidase OMA1 (337 aa).

The Mitochondrial matrix segment spans residues 1–68; it reads MFLNKYISNY…QPNPRDKRFQ (68 aa). The helical transmembrane segment at 69–89 threads the bilayer; that stretch reads WIFGALIAGGGVYYFTHLEYV. The Mitochondrial intermembrane portion of the chain corresponds to 90–337; it reads PISNRRRFND…MLQSFKEVHW (248 aa). Histidine 195 is a Zn(2+) binding site. Glutamate 196 is a catalytic residue. Residues histidine 199 and glutamate 250 each coordinate Zn(2+). Cysteine 265 and cysteine 321 are joined by a disulfide.

This sequence belongs to the peptidase M48 family. Requires Zn(2+) as cofactor.

It localises to the mitochondrion inner membrane. Its activity is regulated as follows. Protease activity is induced in response to various mitochondrial stress. Its function is as follows. Protease that is part of the quality control system in the inner membrane of mitochondria. Cleaves and thereby promotes the turnover of mistranslated or misfolded membrane protein. The chain is Mitochondrial metalloendopeptidase OMA1 from Schizosaccharomyces pombe (strain 972 / ATCC 24843) (Fission yeast).